A 319-amino-acid polypeptide reads, in one-letter code: Acetyl-coenzyme A carboxylase carboxyl transferase subunit alpha (319 aa).

The CoA carboxyltransferase C-terminal domain maps to Asp-35–Glu-296.

The protein belongs to the AccA family. Acetyl-CoA carboxylase is a heterohexamer composed of biotin carboxyl carrier protein (AccB), biotin carboxylase (AccC) and two subunits each of ACCase subunit alpha (AccA) and ACCase subunit beta (AccD).

It is found in the cytoplasm. The enzyme catalyses N(6)-carboxybiotinyl-L-lysyl-[protein] + acetyl-CoA = N(6)-biotinyl-L-lysyl-[protein] + malonyl-CoA. The protein operates within lipid metabolism; malonyl-CoA biosynthesis; malonyl-CoA from acetyl-CoA: step 1/1. In terms of biological role, component of the acetyl coenzyme A carboxylase (ACC) complex. First, biotin carboxylase catalyzes the carboxylation of biotin on its carrier protein (BCCP) and then the CO(2) group is transferred by the carboxyltransferase to acetyl-CoA to form malonyl-CoA. In Aliivibrio salmonicida (strain LFI1238) (Vibrio salmonicida (strain LFI1238)), this protein is Acetyl-coenzyme A carboxylase carboxyl transferase subunit alpha.